Here is a 357-residue protein sequence, read N- to C-terminus: Probable 3'(2'),5'-bisphosphate nucleotidase 3 (357 aa).

The Proton acceptor role is filled by D46. Residues E71, D135, and I137 each coordinate Mg(2+). T140 serves as the catalytic Proton acceptor. T140, S256, K259, and R273 together coordinate adenosine 3',5'-bisphosphate. AMP-binding residues include S256, K259, and R273.

The protein belongs to the inositol monophosphatase superfamily. Mg(2+) serves as cofactor.

The catalysed reaction is 3'-phosphoadenylyl sulfate + H2O = adenosine 5'-phosphosulfate + phosphate. The enzyme catalyses adenosine 3',5'-bisphosphate + H2O = AMP + phosphate. It carries out the reaction adenosine 2',5'-bisphosphate + H2O = AMP + phosphate. It catalyses the reaction 1D-myo-inositol 1,4-bisphosphate + H2O = 1D-myo-inositol 4-phosphate + phosphate. The catalysed reaction is 1D-myo-inositol 1,3,4-trisphosphate + H2O = 1D-myo-inositol 3,4-bisphosphate + phosphate. It participates in signal transduction; phosphatidylinositol signaling pathway. In terms of biological role, phosphatase that converts adenosine 3'-phosphate 5'-phosphosulfate (PAPS) to adenosine 5'-phosphosulfate (APS) and 3'(2')-phosphoadenosine 5'-phosphate (PAP) to AMP. Is also able to hydrolyze inositol 1,4-bisphosphate and inositol 1,3,4-trisphosphate. This Arabidopsis thaliana (Mouse-ear cress) protein is Probable 3'(2'),5'-bisphosphate nucleotidase 3 (SAL3).